The chain runs to 452 residues: Maltoporin (452 aa).

Positions 1–25 (MMITLRKLPLAVAVAAGVMSAQAMA) are cleaved as a signal peptide.

It belongs to the porin LamB (TC 1.B.3) family. In terms of assembly, homotrimer formed of three 18-stranded antiparallel beta-barrels, containing three independent channels.

The protein resides in the cell outer membrane. The enzyme catalyses beta-maltose(in) = beta-maltose(out). Involved in the transport of maltose and maltodextrins. This chain is Maltoporin, found in Salmonella paratyphi A (strain ATCC 9150 / SARB42).